A 270-amino-acid polypeptide reads, in one-letter code: Acyl-[acyl-carrier-protein]--UDP-N-acetylglucosamine O-acyltransferase (270 aa).

The protein belongs to the transferase hexapeptide repeat family. LpxA subfamily. In terms of assembly, homotrimer.

Its subcellular location is the cytoplasm. It carries out the reaction a (3R)-hydroxyacyl-[ACP] + UDP-N-acetyl-alpha-D-glucosamine = a UDP-3-O-[(3R)-3-hydroxyacyl]-N-acetyl-alpha-D-glucosamine + holo-[ACP]. Its pathway is glycolipid biosynthesis; lipid IV(A) biosynthesis; lipid IV(A) from (3R)-3-hydroxytetradecanoyl-[acyl-carrier-protein] and UDP-N-acetyl-alpha-D-glucosamine: step 1/6. In terms of biological role, involved in the biosynthesis of lipid A, a phosphorylated glycolipid that anchors the lipopolysaccharide to the outer membrane of the cell. This is Acyl-[acyl-carrier-protein]--UDP-N-acetylglucosamine O-acyltransferase from Sinorhizobium fredii (strain NBRC 101917 / NGR234).